The chain runs to 158 residues: Protein EOLA1 (158 aa).

The ASCH domain maps to 6–92 (LSFRQPYAGF…IAGLVDIGET (87 aa)).

This sequence belongs to the EOLA family. As to quaternary structure, interacts with MT2A. In terms of tissue distribution, expressed primarily in heart, skeletal muscle, kidney, liver and placenta. Relatively high level of expression in spleen, colon and small intestine. Almost no expression in brain, thymus, lung and peripheral blood leukocytes. Expressed in epithelial cells (at protein level).

Functionally, may play a role in cell protection during the inflammatory response. In epithelial cells, negatively regulates IL6 production and apoptosis through the regulation of MT2A expression. The sequence is that of Protein EOLA1 from Homo sapiens (Human).